The primary structure comprises 885 residues: Translation initiation factor IF-2 (885 aa).

A disordered region spans residues 1–295 (MTDNKDDKTI…EKFKRSQMQE (295 aa)). Positions 63–77 (PVAAAPAAARPAEQR) are enriched in low complexity. Residues 78-94 (PMPPQPSGRPAPQPQPH) are compositionally biased toward pro residues. The segment covering 130 to 183 (RDAEEAKRRAEEEVRRRREEEERIAREKEEAARRAAEEAARPAVEAEKVEEKVE) has biased composition (basic and acidic residues). The segment covering 184–201 (AATPAVAETRPLSERPAP) has biased composition (low complexity). The 168-residue stretch at 383–550 (ARPPIVTIMG…AILLQSEILD (168 aa)) folds into the tr-type G domain. Positions 392–399 (GHVDHGKT) are G1. 392-399 (GHVDHGKT) is a binding site for GTP. A G2 region spans residues 417–421 (GITQH). Residues 438-441 (DTPG) are G3. Residues 438 to 442 (DTPGH) and 492 to 495 (NKID) each bind GTP. Residues 492–495 (NKID) form a G4 region. Residues 528–530 (SAK) are G5.

Belongs to the TRAFAC class translation factor GTPase superfamily. Classic translation factor GTPase family. IF-2 subfamily.

It localises to the cytoplasm. Its function is as follows. One of the essential components for the initiation of protein synthesis. Protects formylmethionyl-tRNA from spontaneous hydrolysis and promotes its binding to the 30S ribosomal subunits. Also involved in the hydrolysis of GTP during the formation of the 70S ribosomal complex. The polypeptide is Translation initiation factor IF-2 (Sinorhizobium medicae (strain WSM419) (Ensifer medicae)).